The primary structure comprises 237 residues: tRNA (guanine-N(7)-)-methyltransferase (237 aa).

The S-adenosyl-L-methionine site is built by glutamate 67, glutamate 92, aspartate 119, and aspartate 141. Residue aspartate 141 is part of the active site. Residues lysine 145, aspartate 177, and 214-217 (TRYE) each bind substrate.

It belongs to the class I-like SAM-binding methyltransferase superfamily. TrmB family.

It catalyses the reaction guanosine(46) in tRNA + S-adenosyl-L-methionine = N(7)-methylguanosine(46) in tRNA + S-adenosyl-L-homocysteine. It functions in the pathway tRNA modification; N(7)-methylguanine-tRNA biosynthesis. In terms of biological role, catalyzes the formation of N(7)-methylguanine at position 46 (m7G46) in tRNA. The protein is tRNA (guanine-N(7)-)-methyltransferase of Jannaschia sp. (strain CCS1).